The sequence spans 193 residues: Ion-translocating oxidoreductase complex subunit B (193 aa).

The interval 1–26 is hydrophobic; sequence MSTMLIAVILLTLLALFFGVLLGFAA. The 59-residue stretch at 32 to 90 folds into the 4Fe-4S domain; the sequence is EGNPIVDELEAILPQTQCGQCGYPGCRPYAEAIANGDKVNKCPPGGTATMEKLANLMGV. Residues cysteine 49, cysteine 52, cysteine 57, cysteine 73, cysteine 114, cysteine 117, cysteine 120, cysteine 124, cysteine 144, cysteine 147, cysteine 150, and cysteine 154 each contribute to the [4Fe-4S] cluster site. 4Fe-4S ferredoxin-type domains follow at residues 105-134 and 136-164; these read KVAY…GAGK and MHTV…MIPV.

Belongs to the 4Fe4S bacterial-type ferredoxin family. RnfB subfamily. In terms of assembly, the complex is composed of six subunits: RnfA, RnfB, RnfC, RnfD, RnfE and RnfG. The cofactor is [4Fe-4S] cluster.

The protein localises to the cell inner membrane. Functionally, part of a membrane-bound complex that couples electron transfer with translocation of ions across the membrane. The chain is Ion-translocating oxidoreductase complex subunit B from Shewanella sp. (strain ANA-3).